A 119-amino-acid chain; its full sequence is Protein FAM24A-like (119 aa).

The N-terminal stretch at 1–40 (MYKPFDLRTIITIIIGCGILTAMFLLIGLVLCLYSKISKA) is a signal peptide.

This sequence belongs to the FAM24 family.

It localises to the secreted. This Mus musculus (Mouse) protein is Protein FAM24A-like.